The sequence spans 197 residues: Negative modulator of initiation of replication (197 aa).

Belongs to the SeqA family. In terms of assembly, homodimer. Polymerizes to form helical filaments.

The protein localises to the cytoplasm. Negative regulator of replication initiation, which contributes to regulation of DNA replication and ensures that replication initiation occurs exactly once per chromosome per cell cycle. Binds to pairs of hemimethylated GATC sequences in the oriC region, thus preventing assembly of replication proteins and re-initiation at newly replicated origins. Repression is relieved when the region becomes fully methylated. The polypeptide is Negative modulator of initiation of replication (Pseudoalteromonas translucida (strain TAC 125)).